The sequence spans 607 residues: MTRVTVQTAGVHYKWQMPDQLTQQLRLAHDLREDLVTLEYEYEDAVKAVWSSYPAVAALEAQVAELDERASELASTVKEEKSRQRTKRPSHPAVAQLAETRAQLKAAKASRREAIASVRDEATERLRTISDERYAAQKQLYRDYCTDGLLYWATFNAVLDHHKTAVKRIAAHRKQGRAAQLRHHRWDGTGTISVQLQRQATDPARTPAIIADADTGKWRSSLIVPWVNPDVWDTMDRASRRKAGRVVIRMRCGSSRNPDGTKTSEWIDVPVQQHRMLPADADITAAQLTVRREGADLRATIGITAKIPDQGEVDEGPTIAVHLGWRSSDHGTVVATWRSTEPLDIPETLRGVITTQSAERTVGSIVVPHRIEQRVHHHATVASHRDLAVDSIRDTLVAWLTEHGPQPHPYDGDPITAASVQRWKAPRRFAWLALQWRDTPPPEGADIAETLEAWRRADKKLWLESEHGRGRALRHRTDLHRQVAAYFAGVAGRIVVDDSDIAQIAGTAKHSELLTDVDRQIARRRAIAAPGMLRAAIVAAATRDEVPTTTVSHTGLSRVHAACGHENPADDRYLMQPVLCDGCGRTYDTDLSATILMLQRASAATSN.

Residues 1-16 form a wedge domain (WED-N) region; the sequence is MTRVTVQTAGVHYKWQ. Residues 17–189 are recognition domain (REC); the sequence is MPDQLTQQLR…QLRHHRWDGT (173 aa). The interval 50-124 is roof in REC; that stretch reads WSSYPAVAAL…IASVRDEATE (75 aa). The segment covering 74–83 has biased composition (basic and acidic residues); the sequence is ASTVKEEKSR. Residues 74-94 are disordered; sequence ASTVKEEKSRQRTKRPSHPAV. The tract at residues 190-315 is wedge domain (WED-C); sequence GTISVQLQRQ…KIPDQGEVDE (126 aa). The tract at residues 316–559 is ruvC-I; it reads GPTIAVHLGW…TVSHTGLSRV (244 aa). A ruvC insertion region spans residues 391–452; the sequence is SIRDTLVAWL…EGADIAETLE (62 aa). The tract at residues 552–588 is target nucleic-acid binding (TNB); sequence SHTGLSRVHAACGHENPADDRYLMQPVLCDGCGRTYD. Zn(2+) contacts are provided by His-560, Cys-563, Cys-580, and Cys-583. The tract at residues 589 to 607 is ruvC-II; that stretch reads TDLSATILMLQRASAATSN. Asp-590 contacts Mg(2+).

Belongs to the CRISPR-associated DNA-binding protein Cas12m family. In terms of assembly, binds crRNA and target dsDNA as a monomer. It depends on Mg(2+) as a cofactor. Zn(2+) is required as a cofactor.

In terms of biological role, CRISPR (clustered regularly interspaced short palindromic repeat), is an adaptive immune system that provides protection against mobile genetic elements (viruses, transposable elements and conjugative plasmids). CRISPR clusters contain sequences complementary to antecedent mobile elements and target invading nucleic acids. CRISPR clusters are transcribed and processed into CRISPR RNA (crRNA). Recognizes a short motif in the CRISPR repeat sequences (the 5' PAM or protospacer adjacent motif, 5'-TTN-3' in this organism) to help distinguish self versus nonself, as targets within the bacterial CRISPR locus do not have PAMs. Upon expression in E.coli as a CRISPR locus inhibits plasmid propagation when targeted to regions essential for plasmid propagation (replication origin and a selectable marker); inhibits expression of a non-selectable marker, probably at the transcriptional level. Protects E.coli against bacteriophage M13mp18, to a lesser extent against lambda and VpaE1 as well as phage T4 with hydroxymethyl or unmodified (but not glycosylated) cytosines. Preferentially binds to its associated crRNA. Cas12m-crRNA binds DNA in a PAM-dependent, crRNA-guided fashion. Binds a 20-bp crRNA-ss-target DNA heteroduplex, in a 52 nucleotide crRNA. No dsDNA, ssDNA or RNA nuclease activity is seen for the crRNA-Cas12m complex. Probably required for pre-crRNA processing to mature crRNA. The protein is CRISPR-associated DNA-binding protein Cas12m of Gordonia otitidis (strain DSM 44809 / CCUG 52243 / JCM 12355 / NBRC 100426 / IFM 10032).